The primary structure comprises 280 residues: MPAQILDGKKIAAEVRAEVKEEVSRLKAEGINPGLAVVLVGEDPASQVYVRNKHRACEEVGIYSEVHRLPAATSQAELLKLIDQLNKDPKIHGILVQLPLPDHIDEKKVIDAIALEKDVDGFSPANVGNLVIGDKCFYPCTPHGCMVLLEKAGIDPKGKKAVVVGRSNIVGKPVAMMLLARHATVTICHSRTRDLAAECRQADILIAAVGKPELITGDMIKEGAVVIDVGINRVGEKKLVGDVHFESAAQKAGWITPVPGGVGPMTIAMLLKNTVEAARR.

NADP(+) contacts are provided by residues 165–167, S190, and I231; that span reads GRS.

This sequence belongs to the tetrahydrofolate dehydrogenase/cyclohydrolase family. In terms of assembly, homodimer.

The catalysed reaction is (6R)-5,10-methylene-5,6,7,8-tetrahydrofolate + NADP(+) = (6R)-5,10-methenyltetrahydrofolate + NADPH. It catalyses the reaction (6R)-5,10-methenyltetrahydrofolate + H2O = (6R)-10-formyltetrahydrofolate + H(+). Its pathway is one-carbon metabolism; tetrahydrofolate interconversion. Catalyzes the oxidation of 5,10-methylenetetrahydrofolate to 5,10-methenyltetrahydrofolate and then the hydrolysis of 5,10-methenyltetrahydrofolate to 10-formyltetrahydrofolate. The chain is Bifunctional protein FolD from Moorella thermoacetica (strain ATCC 39073 / JCM 9320).